Here is a 612-residue protein sequence, read N- to C-terminus: MKKNKVKIDKIPNYEDFKKMKLHELLDLAVLLRKKIIDISENKSAHLSSNLGIVELSMALLYVFDSPQDLIAYDTGHQCYVHKMITDRADKISTIRESNGLSGFQEPNESIHDFISTGHSGNILSICQGFIEKNNSKSKSVIPVIGDAAISNGLAFEALNNIAYNKTPMLIIINDNGMSISKNVGALHKIMSKFQMSKSVFLTEKILRKILFKKEWSKKIYWSIYKSFSKLSKFFKGKNFFESLGFHYFGVIDGNNLKKTINVLKRIKNIVPFGPTILHVKTIKGLGYKEAELDDKGLYHSLKLSDPNLNSNNQTYGSVAANFLEKLIEYDNNIQIINPAMTLSSNFLNLSKKFPNNYEDVGIAEEHAVTKAAGMAIANKKVFVSIYSTFLQRSYDNLLHDVARLELPITFLVDRCDLSYSDGDTHHGIYDIGFLKSIPNTIITCASNKFELERLIILAYQNKSNPFFIRYTKEKCEDIEVKKEFSFGSWVYALQTKESKTCIISYGDIINDLKKEIKTKSIDLINAVFITNYQKENVLRILSTYKNIYVVEKVFDSNCLGDDLIILANENKLSCNIKKINIRNNKIGFGNKEDIDKKLNIDMNSIFAEIKS.

Thiamine diphosphate is bound by residues histidine 77 and 118–120; that span reads GHS. A Mg(2+)-binding site is contributed by aspartate 147. Thiamine diphosphate-binding positions include 148–149, asparagine 176, tyrosine 288, and glutamate 365; that span reads AA. A Mg(2+)-binding site is contributed by asparagine 176.

It belongs to the transketolase family. DXPS subfamily. In terms of assembly, homodimer. Mg(2+) is required as a cofactor. Thiamine diphosphate serves as cofactor.

The enzyme catalyses D-glyceraldehyde 3-phosphate + pyruvate + H(+) = 1-deoxy-D-xylulose 5-phosphate + CO2. It participates in metabolic intermediate biosynthesis; 1-deoxy-D-xylulose 5-phosphate biosynthesis; 1-deoxy-D-xylulose 5-phosphate from D-glyceraldehyde 3-phosphate and pyruvate: step 1/1. In terms of biological role, catalyzes the acyloin condensation reaction between C atoms 2 and 3 of pyruvate and glyceraldehyde 3-phosphate to yield 1-deoxy-D-xylulose-5-phosphate (DXP). This chain is 1-deoxy-D-xylulose-5-phosphate synthase, found in Malacoplasma penetrans (strain HF-2) (Mycoplasma penetrans).